Here is a 1092-residue protein sequence, read N- to C-terminus: Isoleucine--tRNA ligase (1092 aa).

A 'HIGH' region motif is present at residues 53 to 63 (PFANGLPHYGH). The 'KMSKS' region signature appears at 613 to 617 (KLSKR). Lysine 616 lines the ATP pocket.

This sequence belongs to the class-I aminoacyl-tRNA synthetase family. IleS type 2 subfamily. As to quaternary structure, monomer. Zn(2+) serves as cofactor.

Its subcellular location is the cytoplasm. The enzyme catalyses tRNA(Ile) + L-isoleucine + ATP = L-isoleucyl-tRNA(Ile) + AMP + diphosphate. Catalyzes the attachment of isoleucine to tRNA(Ile). As IleRS can inadvertently accommodate and process structurally similar amino acids such as valine, to avoid such errors it has two additional distinct tRNA(Ile)-dependent editing activities. One activity is designated as 'pretransfer' editing and involves the hydrolysis of activated Val-AMP. The other activity is designated 'posttransfer' editing and involves deacylation of mischarged Val-tRNA(Ile). This Rickettsia africae (strain ESF-5) protein is Isoleucine--tRNA ligase.